Reading from the N-terminus, the 785-residue chain is Endonuclease MutS2 (785 aa).

335–342 is an ATP binding site; it reads GPNTGGKT. The Smr domain occupies 710-785; the sequence is LDLRGERYEN…GSGVTIVELK (76 aa).

Belongs to the DNA mismatch repair MutS family. MutS2 subfamily. As to quaternary structure, homodimer. Binds to stalled ribosomes, contacting rRNA.

Endonuclease that is involved in the suppression of homologous recombination and thus may have a key role in the control of bacterial genetic diversity. Functionally, acts as a ribosome collision sensor, splitting the ribosome into its 2 subunits. Detects stalled/collided 70S ribosomes which it binds and splits by an ATP-hydrolysis driven conformational change. Acts upstream of the ribosome quality control system (RQC), a ribosome-associated complex that mediates the extraction of incompletely synthesized nascent chains from stalled ribosomes and their subsequent degradation. Probably generates substrates for RQC. The chain is Endonuclease MutS2 from Bacillus velezensis (strain DSM 23117 / BGSC 10A6 / LMG 26770 / FZB42) (Bacillus amyloliquefaciens subsp. plantarum).